The chain runs to 321 residues: Lipoyl synthase (321 aa).

Residues Cys68, Cys73, Cys79, Cys94, Cys98, Cys101, and Ser308 each contribute to the [4Fe-4S] cluster site. One can recognise a Radical SAM core domain in the interval 80–297 (FNHGTATFMI…KAEAMAMGFT (218 aa)).

This sequence belongs to the radical SAM superfamily. Lipoyl synthase family. [4Fe-4S] cluster is required as a cofactor.

The protein localises to the cytoplasm. The enzyme catalyses [[Fe-S] cluster scaffold protein carrying a second [4Fe-4S](2+) cluster] + N(6)-octanoyl-L-lysyl-[protein] + 2 oxidized [2Fe-2S]-[ferredoxin] + 2 S-adenosyl-L-methionine + 4 H(+) = [[Fe-S] cluster scaffold protein] + N(6)-[(R)-dihydrolipoyl]-L-lysyl-[protein] + 4 Fe(3+) + 2 hydrogen sulfide + 2 5'-deoxyadenosine + 2 L-methionine + 2 reduced [2Fe-2S]-[ferredoxin]. It participates in protein modification; protein lipoylation via endogenous pathway; protein N(6)-(lipoyl)lysine from octanoyl-[acyl-carrier-protein]: step 2/2. Its function is as follows. Catalyzes the radical-mediated insertion of two sulfur atoms into the C-6 and C-8 positions of the octanoyl moiety bound to the lipoyl domains of lipoate-dependent enzymes, thereby converting the octanoylated domains into lipoylated derivatives. In Yersinia pseudotuberculosis serotype O:1b (strain IP 31758), this protein is Lipoyl synthase.